Consider the following 444-residue polypeptide: Zinc finger protein ZIC 1 (444 aa).

The C2H2-type 1 zinc-finger motif lies at 222–257 (LICKWIEPEQLANPKKSCNKTFSTMHELVTHVTVEH). The C2H2-type 2; degenerate zinc-finger motif lies at 271-293 (EECPREGKPFKAKYKLVNHIRVH). 3 consecutive C2H2-type zinc fingers follow at residues 299 to 323 (FPCP…KRTH), 329 to 353 (FKCE…MHVH), and 359 to 381 (YLCK…MKVH). Positions 372–432 (SSLRKHMKVH…SSAGHHTASH (61 aa)) are disordered. The segment covering 383–432 (SSSQGSQPSPAASSGYESSTPPTIVSPSTENQTASSLSPSSSAGHHTASH) has biased composition (low complexity).

It belongs to the GLI C2H2-type zinc-finger protein family.

The protein resides in the nucleus. It is found in the cytoplasm. In terms of biological role, acts as a transcriptional activator. Involved in neurogenesis. Plays important roles in the early stage of organogenesis of the CNS, as well as during dorsal spinal cord development and maturation of the cerebellum. Binds to the minimal GLI-consensus sequence 5'-TGGGTGGTC-3'. This Gallus gallus (Chicken) protein is Zinc finger protein ZIC 1 (ZIC1).